The chain runs to 279 residues: Tumor protein p63-regulated gene 1 protein (279 aa).

The interval 1–49 (MSTIGSFDGFQPVSLKQEEEDQPSENDHLSTKEGNSGKDPGSRRISRQQ) is disordered. Positions 72-259 (VTRPGAIETA…ILIETYTGLM (188 aa)) constitute a hSac2 domain.

This sequence belongs to the TPRG1 family. Highly expressed in skin. Also detected at low levels in tongue and esophagus.

It localises to the cytoplasm. The protein is Tumor protein p63-regulated gene 1 protein of Mus musculus (Mouse).